A 224-amino-acid polypeptide reads, in one-letter code: Transcriptional regulatory protein DltR (224 aa).

Residues 2 to 116 enclose the Response regulatory domain; sequence RLLVVEDEKS…ELLARIRLRT (115 aa). Position 51 is a 4-aspartylphosphate (Asp51). The ompR/PhoB-type DNA-binding region spans 124-222; that stretch reads ANQLRLGNIR…TKGFGYSLEE (99 aa).

In terms of processing, phosphorylated by DltS.

It is found in the cytoplasm. Its function is as follows. Member of the two-component regulatory system DltS/DltR. Regulates the expression of the dlt operon. The polypeptide is Transcriptional regulatory protein DltR (dltR) (Streptococcus agalactiae serotype III (strain NEM316)).